Here is an 849-residue protein sequence, read N- to C-terminus: Villin-1 (849 aa).

5 Gelsolin-like repeats span residues Ile-30–Leu-107, Arg-147–Lys-213, Val-262–Phe-335, Gln-405–Phe-475, and Ala-527–Leu-566. Residues Glu-739–Leu-849 are disordered. Composition is skewed to low complexity over residues Lys-747–Thr-782 and Pro-791–Ser-823.

It belongs to the villin/gelsolin family.

It localises to the cytoplasm. The protein resides in the cytoskeleton. Ca(2+)-independent actin-binding protein. Binds actin microfilaments (MFs). Involved in actin filament bundling, severing and capping. Caps the barbed end of actin filaments and protects them from disassembly. Promotes VLN3-mediated MF severing. In Oryza sativa subsp. indica (Rice), this protein is Villin-1.